Consider the following 919-residue polypeptide: Coiled-coil domain-containing protein 66 (919 aa).

Disordered stretches follow at residues 145–166 (KEET…KDEN), 456–505 (ERDR…RERE), 724–744 (ERNN…LPSP), and 762–816 (LKSD…EPSH). Residues 150–161 (QDSLHLNNTSNQ) show a composition bias toward polar residues. The stretch at 467–558 (HQKAITAQVE…EQRIRELAQK (92 aa)) forms a coiled coil. The interval 570 to 919 (GGYGLDDVSG…NQEENFNSSF (350 aa)) is mediates localization to cilia, centrosomes and spindle microtubules and the interaction with PCM1, CEP290, CEP104 and CSPP1.

As to quaternary structure, homodimer; disulfide-linked. Interacts with CEP290. Interacts with PCM1. Interacts with ARMC9, TOGARAM1, CSPP1 and CEP104. Interacts with CDK5RAP2, CEP152, CEP192, TBG1 and PRC1. As to expression, expressed in retina and blood. Expressed in retina, mainly in photoreceptors but also in outer plexiform and ganglion cell layers (at protein level).

Its subcellular location is the cytoplasm. The protein resides in the cytoskeleton. It localises to the microtubule organizing center. The protein localises to the centrosome. It is found in the centriolar satellite. Its subcellular location is the cell projection. The protein resides in the cilium. It localises to the cilium basal body. The protein localises to the cilium axoneme. It is found in the photoreceptor inner segment. Its subcellular location is the photoreceptor outer segment. Its function is as follows. Microtubule-binding protein required for ciliogenesis. May function in ciliogenesis by mediating the transport of proteins like BBS4 to the cilium, but also through the organization of the centriolar satellites. Required for the assembly of signaling-competent cilia with proper structure and length. Mediates this function in part by regulating transition zone assembly and basal body recruitment of the IFT-B complex. Cooperates with the ciliopathy proteins CSPP1 and CEP104 during cilium length regulation. Plays two important roles during cell division. First, is required for mitotic progression via regulation of spindle assembly, organization and orientation, levels of spindle microtubules (MTs), kinetochore-fiber integrity, and chromosome alignment. Second, functions during cytokinesis in part by regulating assembly and organization of central spindle and midbody MTs. Plays a role in retina morphogenesis and/or homeostasis. The polypeptide is Coiled-coil domain-containing protein 66 (CCDC66) (Canis lupus familiaris (Dog)).